The sequence spans 513 residues: MIQIKRALVSVSDKTGITEICSFLTKHGVEILSTGGTYDALSKAGIAVKKVDEFTGFPEILHGRVKTLHPKIHGGLLGDTTNPDHVKQMESNGIVPITLVIVNLYPFVKTVMKPDVTLEDAIENIDIGGPSMLRSAAKNHKNVVVLTDPKDYESFQNEFTTNNGKISRETAFGYAAKVFSETASYDSAISSYFNKRLGIKYPDKITFAFNKKQKLRYGENPHQDAAFYEPLFLKSQFEALQGKELSFNNMLDFDAAFHVASLLPKNAVSIVKHLNPCGIAFGETVLESFELARKTDPISAFGGIIGIHGRVEKESAEEITKNFVEGVIAESFSNEALEIFAKKPNIRLIPIAKFDEALDELDLRSLHHGLLIQNRDYDLITKDKLKIVSKKQPTEDDLEGLMFAWNCVKFIKSNAIVYTDQNSTLGIGAGQMSRVDSVELGAMKAQKVGLSVVGSYVGSDAFFPFRDGIDAIAKVGAKAIIQPGGSIRDEEVIQAADEHGLIMVFTGMRHFRH.

The region spanning Met-1 to Thr-147 is the MGS-like domain.

It belongs to the PurH family.

It catalyses the reaction (6R)-10-formyltetrahydrofolate + 5-amino-1-(5-phospho-beta-D-ribosyl)imidazole-4-carboxamide = 5-formamido-1-(5-phospho-D-ribosyl)imidazole-4-carboxamide + (6S)-5,6,7,8-tetrahydrofolate. It carries out the reaction IMP + H2O = 5-formamido-1-(5-phospho-D-ribosyl)imidazole-4-carboxamide. The protein operates within purine metabolism; IMP biosynthesis via de novo pathway; 5-formamido-1-(5-phospho-D-ribosyl)imidazole-4-carboxamide from 5-amino-1-(5-phospho-D-ribosyl)imidazole-4-carboxamide (10-formyl THF route): step 1/1. It participates in purine metabolism; IMP biosynthesis via de novo pathway; IMP from 5-formamido-1-(5-phospho-D-ribosyl)imidazole-4-carboxamide: step 1/1. This chain is Bifunctional purine biosynthesis protein PurH, found in Leptospira biflexa serovar Patoc (strain Patoc 1 / Ames).